Reading from the N-terminus, the 232-residue chain is Probable fimbrial chaperone LpfB (232 aa).

An N-terminal signal peptide occupies residues 1-24 (MDRMMKSKFVALALSLFLSQSVLA).

Belongs to the periplasmic pilus chaperone family.

It is found in the periplasm. Part of the lpfABCC'DE fimbrial operon. LP fimbriae may participate in the interaction with eukaryotic cells by assisting in microcolony formation. In Escherichia coli O157:H7, this protein is Probable fimbrial chaperone LpfB (lpfB).